Here is a 604-residue protein sequence, read N- to C-terminus: Proline--tRNA ligase (604 aa).

It belongs to the class-II aminoacyl-tRNA synthetase family. ProS type 1 subfamily. Homodimer.

Its subcellular location is the cytoplasm. The catalysed reaction is tRNA(Pro) + L-proline + ATP = L-prolyl-tRNA(Pro) + AMP + diphosphate. Catalyzes the attachment of proline to tRNA(Pro) in a two-step reaction: proline is first activated by ATP to form Pro-AMP and then transferred to the acceptor end of tRNA(Pro). As ProRS can inadvertently accommodate and process non-cognate amino acids such as alanine and cysteine, to avoid such errors it has two additional distinct editing activities against alanine. One activity is designated as 'pretransfer' editing and involves the tRNA(Pro)-independent hydrolysis of activated Ala-AMP. The other activity is designated 'posttransfer' editing and involves deacylation of mischarged Ala-tRNA(Pro). The misacylated Cys-tRNA(Pro) is not edited by ProRS. The polypeptide is Proline--tRNA ligase (Nostoc punctiforme (strain ATCC 29133 / PCC 73102)).